The primary structure comprises 347 residues: Phosphoribosylformylglycinamidine cyclo-ligase (347 aa).

The protein belongs to the AIR synthase family.

The protein localises to the cytoplasm. It carries out the reaction 2-formamido-N(1)-(5-O-phospho-beta-D-ribosyl)acetamidine + ATP = 5-amino-1-(5-phospho-beta-D-ribosyl)imidazole + ADP + phosphate + H(+). Its pathway is purine metabolism; IMP biosynthesis via de novo pathway; 5-amino-1-(5-phospho-D-ribosyl)imidazole from N(2)-formyl-N(1)-(5-phospho-D-ribosyl)glycinamide: step 2/2. This is Phosphoribosylformylglycinamidine cyclo-ligase from Prochlorococcus marinus (strain MIT 9301).